The sequence spans 399 residues: Imidazolonepropionase (399 aa).

Over residues 1-13 (MSETLYTGISQLA) the composition is skewed to polar residues. Residues 1-20 (MSETLYTGISQLATPRPGPQ) are disordered. Residues histidine 74 and histidine 76 each coordinate Fe(3+). Zn(2+) contacts are provided by histidine 74 and histidine 76. 4-imidazolone-5-propanoate contacts are provided by arginine 83, tyrosine 146, and histidine 176. Position 146 (tyrosine 146) interacts with N-formimidoyl-L-glutamate. Histidine 238 is a Fe(3+) binding site. Residue histidine 238 participates in Zn(2+) binding. Glutamine 241 provides a ligand contact to 4-imidazolone-5-propanoate. Aspartate 312 lines the Fe(3+) pocket. Aspartate 312 is a Zn(2+) binding site. Positions 314 and 316 each coordinate N-formimidoyl-L-glutamate. Serine 317 provides a ligand contact to 4-imidazolone-5-propanoate.

It belongs to the metallo-dependent hydrolases superfamily. HutI family. Zn(2+) serves as cofactor. Requires Fe(3+) as cofactor.

The protein resides in the cytoplasm. It carries out the reaction 4-imidazolone-5-propanoate + H2O = N-formimidoyl-L-glutamate. It functions in the pathway amino-acid degradation; L-histidine degradation into L-glutamate; N-formimidoyl-L-glutamate from L-histidine: step 3/3. Its function is as follows. Catalyzes the hydrolytic cleavage of the carbon-nitrogen bond in imidazolone-5-propanoate to yield N-formimidoyl-L-glutamate. It is the third step in the universal histidine degradation pathway. The polypeptide is Imidazolonepropionase (Deinococcus radiodurans (strain ATCC 13939 / DSM 20539 / JCM 16871 / CCUG 27074 / LMG 4051 / NBRC 15346 / NCIMB 9279 / VKM B-1422 / R1)).